Reading from the N-terminus, the 271-residue chain is Integral membrane protein 2C (271 aa).

A Phosphothreonine modification is found at T41. A helical; Signal-anchor for type II membrane protein transmembrane segment spans residues V59–A79. Positions F140 to L234 constitute a BRICHOS domain. Cysteines 167 and 226 form a disulfide. N173 is a glycosylation site (N-linked (GlcNAc...) asparagine).

This sequence belongs to the ITM2 family. In terms of assembly, interacts with BACE1. Interacts with APP. Interacts with STMN2. Type I membrane-bound, as well as soluble, furin has a pre-eminent role in ITM2C proteolytic processing. PCSK7 and PCSK5 may also be involved although to a lesser extent. The soluble form of PCSK7 is incapable of processing ITM2C. Fails to undergo shedding by ADAM10 and intramembrane cleavage by SPPL2B.

It is found in the lysosome membrane. Its subcellular location is the cell membrane. In terms of biological role, negative regulator of amyloid-beta peptide production. May inhibit the processing of APP by blocking its access to alpha- and beta-secretase. Binding to the beta-secretase-cleaved APP C-terminal fragment is negligible, suggesting that ITM2C is a poor gamma-secretase cleavage inhibitor. May play a role in TNF-induced cell death and neuronal differentiation. In Bos taurus (Bovine), this protein is Integral membrane protein 2C (ITM2C).